Here is a 1109-residue protein sequence, read N- to C-terminus: DNA mismatch repair protein MSH7 (1109 aa).

Disordered regions lie at residues 19 to 45 (TKGL…KEGD) and 61 to 86 (DEVR…KPAE). Basic and acidic residues predominate over residues 61–74 (DEVRGTDTPPEKVP). 853–860 (GPNMGGKS) provides a ligand contact to ATP.

It belongs to the DNA mismatch repair MutS family. In terms of assembly, heterodimer consisting of MSH2-MSH7 (MutS gamma).

It is found in the nucleus. Functionally, component of the post-replicative DNA mismatch repair system (MMR). Forms the heterodimer MutS gamma (MSH2-MSH7 heterodimer) which binds to DNA mismatches thereby initiating DNA repair. MutS gamma recognizes specifically the T/G single base mismatch, but not trinucleotide insertion-deletion loops (IDL). The protein is DNA mismatch repair protein MSH7 (MSH7) of Arabidopsis thaliana (Mouse-ear cress).